The primary structure comprises 418 residues: F-box protein At1g10780 (418 aa).

The 47-residue stretch at 1-47 (MDSLPDAILQYILSYLTSARDVAACNCVSKRWKESTDSVKSVVFHRN) folds into the F-box domain.

The chain is F-box protein At1g10780 from Arabidopsis thaliana (Mouse-ear cress).